Reading from the N-terminus, the 568-residue chain is Sulfite reductase [NADPH] hemoprotein beta-component (568 aa).

[4Fe-4S] cluster-binding residues include C425, C431, C470, and C474. Position 474 (C474) interacts with siroheme.

This sequence belongs to the nitrite and sulfite reductase 4Fe-4S domain family. Alpha(8)-beta(8). The alpha component is a flavoprotein, the beta component is a hemoprotein. Siroheme serves as cofactor. [4Fe-4S] cluster is required as a cofactor.

The enzyme catalyses hydrogen sulfide + 3 NADP(+) + 3 H2O = sulfite + 3 NADPH + 4 H(+). Its pathway is sulfur metabolism; hydrogen sulfide biosynthesis; hydrogen sulfide from sulfite (NADPH route): step 1/1. Functionally, component of the sulfite reductase complex that catalyzes the 6-electron reduction of sulfite to sulfide. This is one of several activities required for the biosynthesis of L-cysteine from sulfate. In Xanthomonas campestris pv. campestris (strain ATCC 33913 / DSM 3586 / NCPPB 528 / LMG 568 / P 25), this protein is Sulfite reductase [NADPH] hemoprotein beta-component.